A 65-amino-acid polypeptide reads, in one-letter code: Protein C13 (65 aa).

It belongs to the poxviridae C13 protein family.

The chain is Protein C13 from Vaccinia virus (strain Copenhagen) (VACV).